A 98-amino-acid chain; its full sequence is Large ribosomal subunit protein uL23 (98 aa).

The protein belongs to the universal ribosomal protein uL23 family. As to quaternary structure, part of the 50S ribosomal subunit. Contacts protein L29, and trigger factor when it is bound to the ribosome.

In terms of biological role, one of the early assembly proteins it binds 23S rRNA. One of the proteins that surrounds the polypeptide exit tunnel on the outside of the ribosome. Forms the main docking site for trigger factor binding to the ribosome. The protein is Large ribosomal subunit protein uL23 of Methylobacterium radiotolerans (strain ATCC 27329 / DSM 1819 / JCM 2831 / NBRC 15690 / NCIMB 10815 / 0-1).